We begin with the raw amino-acid sequence, 282 residues long: Formamidopyrimidine-DNA glycosylase (282 aa).

P2 serves as the catalytic Schiff-base intermediate with DNA. Catalysis depends on E3, which acts as the Proton donor. Catalysis depends on K60, which acts as the Proton donor; for beta-elimination activity. H99, R118, and R163 together coordinate DNA. Residues 248–282 form an FPG-type zinc finger; sequence WVYGRTGEPCRVCGTSIERLKLGGRSAHFCPRCQA. R272 serves as the catalytic Proton donor; for delta-elimination activity.

This sequence belongs to the FPG family. In terms of assembly, monomer. The cofactor is Zn(2+).

The enzyme catalyses Hydrolysis of DNA containing ring-opened 7-methylguanine residues, releasing 2,6-diamino-4-hydroxy-5-(N-methyl)formamidopyrimidine.. It catalyses the reaction 2'-deoxyribonucleotide-(2'-deoxyribose 5'-phosphate)-2'-deoxyribonucleotide-DNA = a 3'-end 2'-deoxyribonucleotide-(2,3-dehydro-2,3-deoxyribose 5'-phosphate)-DNA + a 5'-end 5'-phospho-2'-deoxyribonucleoside-DNA + H(+). In terms of biological role, involved in base excision repair of DNA damaged by oxidation or by mutagenic agents. Acts as a DNA glycosylase that recognizes and removes damaged bases. Has a preference for oxidized purines, such as 7,8-dihydro-8-oxoguanine (8-oxoG). Has AP (apurinic/apyrimidinic) lyase activity and introduces nicks in the DNA strand. Cleaves the DNA backbone by beta-delta elimination to generate a single-strand break at the site of the removed base with both 3'- and 5'-phosphates. This is Formamidopyrimidine-DNA glycosylase from Rippkaea orientalis (strain PCC 8801 / RF-1) (Cyanothece sp. (strain PCC 8801)).